The sequence spans 129 residues: Ribosome-binding factor A (129 aa).

This sequence belongs to the RbfA family. As to quaternary structure, monomer. Binds 30S ribosomal subunits, but not 50S ribosomal subunits or 70S ribosomes.

It is found in the cytoplasm. Its function is as follows. One of several proteins that assist in the late maturation steps of the functional core of the 30S ribosomal subunit. Associates with free 30S ribosomal subunits (but not with 30S subunits that are part of 70S ribosomes or polysomes). Required for efficient processing of 16S rRNA. May interact with the 5'-terminal helix region of 16S rRNA. The sequence is that of Ribosome-binding factor A from Marinomonas sp. (strain MWYL1).